The primary structure comprises 316 residues: Delta(1)-pyrroline-2-carboxylate reductase (316 aa).

Belongs to the ornithine cyclodeaminase/mu-crystallin family.

The enzyme catalyses L-proline + NAD(+) = 1-pyrroline-2-carboxylate + NADH + H(+). It carries out the reaction L-proline + NADP(+) = 1-pyrroline-2-carboxylate + NADPH + H(+). Functionally, catalyzes the reduction of Delta(1)-pyrroline-2-carboxylate (Pyr2C) to L-proline, using preferentially NADPH over NADH as the electron donor. Is likely involved in a degradation pathway that converts trans-3-hydroxy-L-proline (t3LHyp) to L-proline, which would allow P.denitrificans to grow on t3LHyp as a sole carbon source. This chain is Delta(1)-pyrroline-2-carboxylate reductase, found in Paracoccus denitrificans (strain Pd 1222).